A 148-amino-acid chain; its full sequence is MLYILIIILLIGLDQLSKIWVLNNLVDVSTIPIINNVFHLTYVENRGAAFGLLQNNQWIFIIVALLATVFGLYYLNTRKVHIFGRLGIILIISGALGNLIDRVRLGFVVDYFDFRIIWEYVFNIADVFVVVGTVFLCIYVLFFESKSR.

The next 2 helical transmembrane spans lie at 57–77 (QWIF…YLNT) and 80–100 (VHIF…GNLI). Active-site residues include Asp-110 and Asp-126. A helical transmembrane segment spans residues 124 to 144 (IADVFVVVGTVFLCIYVLFFE).

The protein belongs to the peptidase A8 family.

The protein localises to the cell membrane. The enzyme catalyses Release of signal peptides from bacterial membrane prolipoproteins. Hydrolyzes -Xaa-Yaa-Zaa-|-(S,diacylglyceryl)Cys-, in which Xaa is hydrophobic (preferably Leu), and Yaa (Ala or Ser) and Zaa (Gly or Ala) have small, neutral side chains.. The protein operates within protein modification; lipoprotein biosynthesis (signal peptide cleavage). Functionally, this protein specifically catalyzes the removal of signal peptides from prolipoproteins. The polypeptide is Lipoprotein signal peptidase (Clostridioides difficile (strain 630) (Peptoclostridium difficile)).